The following is a 416-amino-acid chain: Multifunctional CCA protein (416 aa).

Residues G8 and R11 each coordinate ATP. 2 residues coordinate CTP: G8 and R11. Mg(2+)-binding residues include D21 and D23. ATP is bound by residues R91, R137, and R140. Residues R91, R137, and R140 each contribute to the CTP site. Residues 228–335 (SFIHTMLVLK…ITLFNRFDVW (108 aa)) enclose the HD domain.

The protein belongs to the tRNA nucleotidyltransferase/poly(A) polymerase family. Bacterial CCA-adding enzyme type 1 subfamily. Monomer. Can also form homodimers and oligomers. It depends on Mg(2+) as a cofactor. The cofactor is Ni(2+).

It catalyses the reaction a tRNA precursor + 2 CTP + ATP = a tRNA with a 3' CCA end + 3 diphosphate. The catalysed reaction is a tRNA with a 3' CCA end + 2 CTP + ATP = a tRNA with a 3' CCACCA end + 3 diphosphate. In terms of biological role, catalyzes the addition and repair of the essential 3'-terminal CCA sequence in tRNAs without using a nucleic acid template. Adds these three nucleotides in the order of C, C, and A to the tRNA nucleotide-73, using CTP and ATP as substrates and producing inorganic pyrophosphate. tRNA 3'-terminal CCA addition is required both for tRNA processing and repair. Also involved in tRNA surveillance by mediating tandem CCA addition to generate a CCACCA at the 3' terminus of unstable tRNAs. While stable tRNAs receive only 3'-terminal CCA, unstable tRNAs are marked with CCACCA and rapidly degraded. The sequence is that of Multifunctional CCA protein from Haemophilus influenzae (strain PittGG).